The following is a 180-amino-acid chain: Negative modulator of initiation of replication (180 aa).

The interval 87–88 (AV) is interaction with DNA.

The protein belongs to the SeqA family. Homodimer. Polymerizes to form helical filaments.

It localises to the cytoplasm. In terms of biological role, negative regulator of replication initiation, which contributes to regulation of DNA replication and ensures that replication initiation occurs exactly once per chromosome per cell cycle. Binds to pairs of hemimethylated GATC sequences in the oriC region, thus preventing assembly of replication proteins and re-initiation at newly replicated origins. Repression is relieved when the region becomes fully methylated. This chain is Negative modulator of initiation of replication, found in Ferrimonas balearica (strain DSM 9799 / CCM 4581 / KCTC 23876 / PAT).